The primary structure comprises 647 residues: DNA mismatch repair protein MutL (647 aa).

It belongs to the DNA mismatch repair MutL/HexB family.

Its function is as follows. This protein is involved in the repair of mismatches in DNA. It is required for dam-dependent methyl-directed DNA mismatch repair. May act as a 'molecular matchmaker', a protein that promotes the formation of a stable complex between two or more DNA-binding proteins in an ATP-dependent manner without itself being part of a final effector complex. This chain is DNA mismatch repair protein MutL, found in Bacillus cereus (strain Q1).